A 366-amino-acid polypeptide reads, in one-letter code: Chorismate synthase (366 aa).

NADP(+) contacts are provided by R48 and R54. FMN contacts are provided by residues 125-127 (RSS), 238-239 (NA), G278, 293-297 (KPTSS), and R319.

Belongs to the chorismate synthase family. In terms of assembly, homotetramer. FMNH2 is required as a cofactor.

The catalysed reaction is 5-O-(1-carboxyvinyl)-3-phosphoshikimate = chorismate + phosphate. It functions in the pathway metabolic intermediate biosynthesis; chorismate biosynthesis; chorismate from D-erythrose 4-phosphate and phosphoenolpyruvate: step 7/7. Its function is as follows. Catalyzes the anti-1,4-elimination of the C-3 phosphate and the C-6 proR hydrogen from 5-enolpyruvylshikimate-3-phosphate (EPSP) to yield chorismate, which is the branch point compound that serves as the starting substrate for the three terminal pathways of aromatic amino acid biosynthesis. This reaction introduces a second double bond into the aromatic ring system. In Paraburkholderia phymatum (strain DSM 17167 / CIP 108236 / LMG 21445 / STM815) (Burkholderia phymatum), this protein is Chorismate synthase.